The following is a 410-amino-acid chain: Platelet-activating factor acetylhydrolase IB subunit alpha (410 aa).

Positions 1 to 38 (MVLSQRQRDELNRAIADYLRSNGYEEAYSVFKKEAELD) are required for self-association and interaction with PAFAH1B2 and PAFAH1B3. The segment at 1–66 (MVLSQRQRDE…SVIRLQKKVM (66 aa)) is interaction with NDE1. Residues 1–102 (MVLSQRQRDE…EWIPRPPEKY (102 aa)) form an interaction with NDEL1 region. The 33-residue stretch at 7–39 (QRDELNRAIADYLRSNGYEEAYSVFKKEAELDM) folds into the LisH domain. Lysine 53 bears the N6-acetyllysine mark. Residues 56–82 (TSVIRLQKKVMELESKLNEAKEEFTSG) adopt a coiled-coil conformation. The segment at 83–410 (GPLGQKRDPK…DQTVKVWECR (328 aa)) is interaction with dynein and dynactin. WD repeat units follow at residues 106-147 (GHRS…RTLK), 148-187 (GHTD…CIRT), 190-229 (GHDH…CVKT), 232-271 (GHRE…CKAE), 274-333 (EHEH…CLMT), 336-377 (GHDN…KTLN), and 378-410 (AHEH…WECR). A Phosphoserine modification is found at serine 109. Positions 367-409 (YKNKRCMKTLNAHEHFVTSLDFHKTAPYVVTGSVDQTVKVWEC) are interaction with DCX. The tract at residues 388-410 (FHKTAPYVVTGSVDQTVKVWECR) is interaction with NDEL1.

The protein belongs to the WD repeat LIS1/nudF family. Can self-associate. Component of the cytosolic PAF-AH (I) heterotetrameric enzyme, which is composed of PAFAH1B1 (beta), PAFAH1B2 (alpha2) and PAFAH1B3 (alpha1) subunits. The catalytic activity of the enzyme resides in the alpha1 (PAFAH1B3) and alpha2 (PAFAH1B2) subunits, whereas the beta subunit (PAFAH1B1) has regulatory activity. Trimer formation is not essential for the catalytic activity. Interacts with the catalytic dimer of PAF-AH (I) heterotetrameric enzyme: interacts with PAFAH1B2 homodimer (alpha2/alpha2 homodimer), PAFAH1B3 homodimer (alpha1/alpha1 homodimer) and PAFAH1B2-PAFAH1B3 heterodimer (alpha2/alpha1 heterodimer). Interacts with DCX, dynein, dynactin, IQGAP1, KATNB1, NDE1, NDEL1, NUDC and RSN. Interacts with DISC1, and this interaction is enhanced by NDEL1. Interacts with DAB1 when DAB1 is phosphorylated in response to RELN/reelin signaling. Interacts with INTS13. Interacts with DCDC1.

Its subcellular location is the cytoplasm. It is found in the cytoskeleton. It localises to the microtubule organizing center. The protein localises to the centrosome. The protein resides in the spindle. Its subcellular location is the nucleus membrane. Its function is as follows. Regulatory subunit (beta subunit) of the cytosolic type I platelet-activating factor (PAF) acetylhydrolase (PAF-AH (I)), an enzyme that catalyzes the hydrolyze of the acetyl group at the sn-2 position of PAF and its analogs and participates in PAF inactivation. Regulates the PAF-AH (I) activity in a catalytic dimer composition-dependent manner. Positively regulates the activity of the minus-end directed microtubule motor protein dynein. May enhance dynein-mediated microtubule sliding by targeting dynein to the microtubule plus end. Required for several dynein- and microtubule-dependent processes such as the maintenance of Golgi integrity, the peripheral transport of microtubule fragments and the coupling of the nucleus and centrosome. Required during brain development for the proliferation of neuronal precursors and the migration of newly formed neurons from the ventricular/subventricular zone toward the cortical plate. Neuronal migration involves a process called nucleokinesis, whereby migrating cells extend an anterior process into which the nucleus subsequently translocates. During nucleokinesis dynein at the nuclear surface may translocate the nucleus towards the centrosome by exerting force on centrosomal microtubules. Also required for proper activation of Rho GTPases and actin polymerization at the leading edge of locomoting cerebellar neurons and postmigratory hippocampal neurons in response to calcium influx triggered via NMDA receptors. May also play a role in other forms of cell locomotion including the migration of fibroblasts during wound healing. Required for dynein recruitment to microtubule plus ends and BICD2-bound cargos. May modulate the Reelin pathway through interaction of the PAF-AH (I) catalytic dimer with VLDLR. The polypeptide is Platelet-activating factor acetylhydrolase IB subunit alpha (Macaca fascicularis (Crab-eating macaque)).